The sequence spans 158 residues: NAD(P)H-quinone oxidoreductase subunit N, organellar chromatophore (158 aa).

This sequence belongs to the complex I NdhN subunit family. In terms of assembly, NDH-1 can be composed of about 15 different subunits; different subcomplexes with different compositions have been identified which probably have different functions.

It is found in the plastid. Its subcellular location is the organellar chromatophore thylakoid membrane. It catalyses the reaction a plastoquinone + NADH + (n+1) H(+)(in) = a plastoquinol + NAD(+) + n H(+)(out). The catalysed reaction is a plastoquinone + NADPH + (n+1) H(+)(in) = a plastoquinol + NADP(+) + n H(+)(out). NDH-1 shuttles electrons from an unknown electron donor, via FMN and iron-sulfur (Fe-S) centers, to quinones in the respiratory and/or the photosynthetic chain. The immediate electron acceptor for the enzyme in this species is believed to be plastoquinone. Couples the redox reaction to proton translocation, and thus conserves the redox energy in a proton gradient. This Paulinella chromatophora protein is NAD(P)H-quinone oxidoreductase subunit N, organellar chromatophore.